The following is a 269-amino-acid chain: MSRLEQRFAELKAEGRSALVTFVTAGDPGYDASLQILKGLPAAGADVIELGMPFTDPMADGVAIQLATLRALEAGQTLVKTLQMVREFRVDNQTTPIVLMGYYNPIHRFGVDTFVTQAKEAGVDGLIIVDLPPEHDAELATPAQAAGIDFIRLTTPTTDDARLPRVLERSSGFVYYVSVAGVTGAGSATTEHVTEAIARLRRHTDLPISVGFGIRTPEQAANIARLADGVVVGSALVDKIAQAKSADQAVTDVLSLCSALAEGVRGARR.

Residues Glu-49 and Asp-60 each act as proton acceptor in the active site.

The protein belongs to the TrpA family. Tetramer of two alpha and two beta chains.

It catalyses the reaction (1S,2R)-1-C-(indol-3-yl)glycerol 3-phosphate + L-serine = D-glyceraldehyde 3-phosphate + L-tryptophan + H2O. Its pathway is amino-acid biosynthesis; L-tryptophan biosynthesis; L-tryptophan from chorismate: step 5/5. Functionally, the alpha subunit is responsible for the aldol cleavage of indoleglycerol phosphate to indole and glyceraldehyde 3-phosphate. This is Tryptophan synthase alpha chain from Pseudomonas putida (strain ATCC 47054 / DSM 6125 / CFBP 8728 / NCIMB 11950 / KT2440).